We begin with the raw amino-acid sequence, 423 residues long: Haloacid dehalogenase-like hydrolase domain-containing 5 (423 aa).

A signal peptide spans 1-23 (MAAWGCVAALGAARGLCWRAARA).

This sequence belongs to the HAD-like hydrolase superfamily. In terms of tissue distribution, widely expressed.

This chain is Haloacid dehalogenase-like hydrolase domain-containing 5, found in Homo sapiens (Human).